A 70-amino-acid chain; its full sequence is Melittin (70 aa).

An N-terminal signal peptide occupies residues 1-21 (MKFLVNVALVFMVVYISFIYA). A propeptide spans 22 to 43 (APEPEPAPEAEAEADAEADPEA) (removed by a dipeptidylpeptidase). Gly-44 is modified (N-formylglycine; partial). Position 69 is a glutamine amide (Gln-69).

The protein belongs to the melittin family. As to quaternary structure, monomer (in solution and for integration into membranes), homotetramer (in solution and potentially as a toroidal pore in membranes), and potenially homomultimer (as a toroidal pore in membranes). In terms of tissue distribution, expressed by the venom gland.

Its subcellular location is the secreted. The protein localises to the target cell membrane. Main toxin of bee venom with strong hemolytic activity and antimicrobial activity. It has enhancing effects on bee venom phospholipase A2 activity. This amphipathic toxin binds to negatively charged membrane surface and forms pore by inserting into lipid bilayers inducing the leakage of ions and molecules and the enhancement of permeability that ultimately leads to cell lysis. It acts as a voltage-gated pore with higher selectivity for anions over cations. The ion conductance has been shown to be voltage-dependent. Self-association of melittin in membranes is promoted by high ionic strength, but not by the presence of negatively charged lipids. In vivo, intradermal injection into healthy human volunteers produce sharp pain sensation and an inflammatory response. It produces pain by activating primary nociceptor cells directly and indirectly due to its ability to activate plasma membrane phospholipase A2 and its pore-forming activity. This chain is Melittin (MELT), found in Polistes hebraeus (Paper wasp).